Consider the following 213-residue polypeptide: Pyridoxine/pyridoxamine 5'-phosphate oxidase (213 aa).

FMN is bound by residues 60 to 65, 75 to 76, lysine 82, and glutamine 104; these read RMVLMK and YS. Lysine 65 provides a ligand contact to substrate. Substrate is bound by residues tyrosine 122 and arginine 126. FMN is bound by residues 139–140 and tryptophan 184; that span reads QS. Residue 190–192 participates in substrate binding; it reads RLH. Arginine 194 contributes to the FMN binding site.

The protein belongs to the pyridoxamine 5'-phosphate oxidase family. In terms of assembly, homodimer. FMN serves as cofactor.

The enzyme catalyses pyridoxamine 5'-phosphate + O2 + H2O = pyridoxal 5'-phosphate + H2O2 + NH4(+). It catalyses the reaction pyridoxine 5'-phosphate + O2 = pyridoxal 5'-phosphate + H2O2. It functions in the pathway cofactor metabolism; pyridoxal 5'-phosphate salvage; pyridoxal 5'-phosphate from pyridoxamine 5'-phosphate: step 1/1. It participates in cofactor metabolism; pyridoxal 5'-phosphate salvage; pyridoxal 5'-phosphate from pyridoxine 5'-phosphate: step 1/1. Functionally, catalyzes the oxidation of either pyridoxine 5'-phosphate (PNP) or pyridoxamine 5'-phosphate (PMP) into pyridoxal 5'-phosphate (PLP). This is Pyridoxine/pyridoxamine 5'-phosphate oxidase from Nitrobacter winogradskyi (strain ATCC 25391 / DSM 10237 / CIP 104748 / NCIMB 11846 / Nb-255).